Reading from the N-terminus, the 269-residue chain is Probable aquaporin TIP5-1 (269 aa).

The next 5 helical transmembrane spans lie at 19-39 (AYFAEFFSTFLFVFIAVGSTI), 54-74 (SLMATAVAQAFGLFAAVFIAA), 84-104 (AVTFAYAIGGHITVPSAIFYW), 139-159 (FGAGILEGVLTFMVVYTVHVA), and 177-197 (ALGALVVGAVTGACVLAAGSL). The short motif at 82 to 84 (NPA) is the NPA 1 element. The short motif at 203-205 (NPA) is the NPA 2 element. The chain crosses the membrane as a helical span at residues 223 to 243 (YWAGPMVGAAVAALVHQALVF).

This sequence belongs to the MIP/aquaporin (TC 1.A.8) family. TIP (TC 1.A.8.10) subfamily. Expressed in leaves and anthers, and at lower levels in roots.

The protein localises to the vacuole membrane. In terms of biological role, aquaporins facilitate the transport of water and small neutral solutes across cell membranes. May be involved in transport from the vacuolar compartment to the cytoplasm. The sequence is that of Probable aquaporin TIP5-1 (TIP5;1) from Oryza sativa subsp. japonica (Rice).